The primary structure comprises 521 residues: Protein disulfide-isomerase A5 (521 aa).

An N-terminal signal peptide occupies residues 1-25 (MARVVPAWLLLPLAVWVVLPTWLSS). Thioredoxin domains are found at residues 136–263 (FLKD…NPQP), 274–386 (ADEG…NPES), and 387–508 (PPPP…TLRE). 3 disulfide bridges follow: C184–C187, C307–C310, and C428–C431. The Prevents secretion from ER signature appears at 518-521 (KEEL).

It belongs to the protein disulfide isomerase family.

Its subcellular location is the endoplasmic reticulum lumen. The catalysed reaction is Catalyzes the rearrangement of -S-S- bonds in proteins.. The sequence is that of Protein disulfide-isomerase A5 (PDIA5) from Bos taurus (Bovine).